Consider the following 324-residue polypeptide: Hydroxyacylglutathione hydrolase 2, mitochondrial (324 aa).

A mitochondrion-targeting transit peptide spans 1–64; that stretch reads MQTISKASSA…KSIRVSKFCS (64 aa). Zn(2+) is bound by residues H124 and H126. Positions 128 and 129 each coordinate Fe cation. H182 and D201 together coordinate Zn(2+). D201 and H239 together coordinate Fe cation.

Belongs to the metallo-beta-lactamase superfamily. Glyoxalase II family. In terms of assembly, monomer. Requires Fe(3+) as cofactor. Fe(2+) is required as a cofactor. Zn(2+) serves as cofactor.

Its subcellular location is the mitochondrion. It catalyses the reaction an S-(2-hydroxyacyl)glutathione + H2O = a 2-hydroxy carboxylate + glutathione + H(+). It functions in the pathway secondary metabolite metabolism; methylglyoxal degradation; (R)-lactate from methylglyoxal: step 2/2. Thiolesterase that catalyzes the hydrolysis of S-D-lactoyl-glutathione to form glutathione and D-lactic acid. The sequence is that of Hydroxyacylglutathione hydrolase 2, mitochondrial from Arabidopsis thaliana (Mouse-ear cress).